The following is a 338-amino-acid chain: Glycerol-3-phosphate dehydrogenase [NAD(P)+] (338 aa).

NADPH contacts are provided by W14, Y50, and K110. K110, G141, and S143 together coordinate sn-glycerol 3-phosphate. Residue A145 participates in NADPH binding. Sn-glycerol 3-phosphate is bound by residues K196, D249, S259, R260, and N261. K196 (proton acceptor) is an active-site residue. Position 260 (R260) interacts with NADPH. E285 serves as a coordination point for NADPH.

It belongs to the NAD-dependent glycerol-3-phosphate dehydrogenase family.

It localises to the cytoplasm. It catalyses the reaction sn-glycerol 3-phosphate + NAD(+) = dihydroxyacetone phosphate + NADH + H(+). It carries out the reaction sn-glycerol 3-phosphate + NADP(+) = dihydroxyacetone phosphate + NADPH + H(+). It participates in membrane lipid metabolism; glycerophospholipid metabolism. In terms of biological role, catalyzes the reduction of the glycolytic intermediate dihydroxyacetone phosphate (DHAP) to sn-glycerol 3-phosphate (G3P), the key precursor for phospholipid synthesis. The polypeptide is Glycerol-3-phosphate dehydrogenase [NAD(P)+] (Malacoplasma penetrans (strain HF-2) (Mycoplasma penetrans)).